The primary structure comprises 492 residues: Fumarate hydratase 1, mitochondrial (492 aa).

The N-terminal 28 residues, 1 to 28, are a transit peptide targeting the mitochondrion; sequence MSIYVASRRLSGGTTVTALRYATSLRSY. Residues 127–129, 157–160, 167–169, and T215 contribute to the substrate site; these read SGT, HPND, and SSN. Catalysis depends on H216, which acts as the Proton donor/acceptor. The active site involves S346. Substrate is bound by residues S347 and 352 to 354; that span reads KVN.

Belongs to the class-II fumarase/aspartase family. Fumarase subfamily. In terms of assembly, homotetramer.

It is found in the mitochondrion. It catalyses the reaction (S)-malate = fumarate + H2O. Its pathway is carbohydrate metabolism; tricarboxylic acid cycle; (S)-malate from fumarate: step 1/1. Fumarate hydratase activity (fumarate to L-malate) is strongly inhibited by phosphoenolpyruvate, citrate, oxaloacetate, ATP and ADP. Malate dehydratase activity (malate to fumarate) is activated by oxaloacetate, pyruvate, Asn and Gln. Malate dehydratase activity (malate to fumarate) is inhibited by citrate, succinate, ADP, ATP, glucose-6P and phosphoenolpyruvate. Its function is as follows. Catalyzes the reversible stereospecific interconversion of fumarate to L-malate. Catalyzes the hydration of fumarate to L-malate in the tricarboxylic acid (TCA) cycle to facilitate a transition step in the production of energy in the form of NADH. The sequence is that of Fumarate hydratase 1, mitochondrial from Arabidopsis thaliana (Mouse-ear cress).